Reading from the N-terminus, the 412-residue chain is Regulator of microtubule dynamics protein 2 (412 aa).

Residues 9 to 28 form a helical membrane-spanning segment; it reads LLLGIMAGTAGISLLVLWYH. Ser-51 is modified (phosphoserine). Positions 72–110 form a coiled coil; that stretch reads QLQILEKLNELLTNVEELKEEIKFLKETIPKLEECIQDE. Ser-121 bears the Phosphoserine mark. The interval 122–153 is disordered; that stretch reads PQHRARKKKTTTTTVQRPATSNSSEEAESEGG. A Phosphothreonine modification is found at Thr-141. At Tyr-154 the chain carries Phosphotyrosine. A phosphothreonine mark is found at Thr-156 and Thr-159.

Belongs to the RMDN family. As to quaternary structure, interacts with microtubules.

The protein localises to the membrane. It is found in the cytoplasm. Its subcellular location is the cytoskeleton. The protein resides in the spindle. It localises to the spindle pole. The polypeptide is Regulator of microtubule dynamics protein 2 (Rmdn2) (Rattus norvegicus (Rat)).